The following is a 138-amino-acid chain: Acidic phospholipase A2 DsM-a2/DsM-a2' (138 aa).

The first 16 residues, 1–16, serve as a signal peptide directing secretion; it reads MRTLWIVAVCLIGVEG. 7 disulfides stabilise this stretch: Cys42–Cys131, Cys44–Cys60, Cys59–Cys111, Cys65–Cys138, Cys66–Cys104, Cys73–Cys97, and Cys91–Cys102. Ca(2+) is bound by residues Tyr43, Gly45, and Gly47. The active site involves His63. Asp64 is a Ca(2+) binding site. Residue Asp105 is part of the active site.

This sequence belongs to the phospholipase A2 family. Group II subfamily. D49 sub-subfamily. The cofactor is Ca(2+). Expressed by the venom gland.

It localises to the secreted. It catalyses the reaction a 1,2-diacyl-sn-glycero-3-phosphocholine + H2O = a 1-acyl-sn-glycero-3-phosphocholine + a fatty acid + H(+). Functionally, exhibits high hydrolytic activities and shows strong preference for the anionic micelles (dPPC with deoxycholate) to the zwitterionic micelles (dPPC with Triton X-100). PLA2 catalyzes the calcium-dependent hydrolysis of the 2-acyl groups in 3-sn-phosphoglycerides. The protein is Acidic phospholipase A2 DsM-a2/DsM-a2' of Daboia siamensis (Eastern Russel's viper).